The following is a 183-amino-acid chain: MAKRGNKKKQEAPLSLGKHTVGGRVGKPTNAKTGSALTSDKSLFDKRIVKQLKNNELFNRLTLPSQELRDGIVRENQTKPSNSNSQSNGAISIRGIAGPTNVVIENLAPGTSSDDVAATLLNFGEILNCQVNDSQGKVRASVRFSTLASAQQVVQKLDGVTADGFKLSCYIKKNSKKRRTQKK.

The segment at 1-36 is disordered; the sequence is MAKRGNKKKQEAPLSLGKHTVGGRVGKPTNAKTGSA. The region spanning 100–174 is the RRM domain; it reads TNVVIENLAP…FKLSCYIKKN (75 aa).

Its subcellular location is the nucleus. It is found in the nucleolus. This is an uncharacterized protein from Schizosaccharomyces pombe (strain 972 / ATCC 24843) (Fission yeast).